The chain runs to 215 residues: Formate dehydrogenase subunit beta (215 aa).

In terms of domain architecture, 4Fe-4S ferredoxin-type 1 spans 3–32 (KGFFVDTTRCTACRGCQVACKQWHGNPATP). [4Fe-4S] cluster contacts are provided by C12, C15, C18, C22, C73, C76, C81, C121, C138, C141, C153, and C157. In terms of domain architecture, 4Fe-4S ferredoxin-type 2 spans 129–168 (VAESNQMAKCDMCIDRITNGLRPACVTSCPTGAMNFGDLS).

As to quaternary structure, heterodimer of alpha (FdhA) and beta (FdhB) subunits. It depends on [4Fe-4S] cluster as a cofactor.

It localises to the periplasm. Its function is as follows. Beta chain of the formate dehydrogenase (FDH) catalyzes the reversible two-electron oxidation of formate to carbon dioxide. FDH loses activity in the presence of air, but this activity can be restored. This chain is an electron transfer unit. This chain is Formate dehydrogenase subunit beta, found in Megalodesulfovibrio gigas (strain ATCC 19364 / DSM 1382 / NCIMB 9332 / VKM B-1759) (Desulfovibrio gigas).